A 158-amino-acid polypeptide reads, in one-letter code: NAD(P)H-quinone oxidoreductase subunit J, chloroplastic (158 aa).

Belongs to the complex I 30 kDa subunit family. As to quaternary structure, NDH is composed of at least 16 different subunits, 5 of which are encoded in the nucleus.

The protein localises to the plastid. Its subcellular location is the chloroplast thylakoid membrane. The enzyme catalyses a plastoquinone + NADH + (n+1) H(+)(in) = a plastoquinol + NAD(+) + n H(+)(out). It carries out the reaction a plastoquinone + NADPH + (n+1) H(+)(in) = a plastoquinol + NADP(+) + n H(+)(out). Its function is as follows. NDH shuttles electrons from NAD(P)H:plastoquinone, via FMN and iron-sulfur (Fe-S) centers, to quinones in the photosynthetic chain and possibly in a chloroplast respiratory chain. The immediate electron acceptor for the enzyme in this species is believed to be plastoquinone. Couples the redox reaction to proton translocation, and thus conserves the redox energy in a proton gradient. The chain is NAD(P)H-quinone oxidoreductase subunit J, chloroplastic from Amborella trichopoda.